The sequence spans 675 residues: Methionine--tRNA ligase (675 aa).

The 'HIGH' region motif lies at 15–25; the sequence is PYANGSIHLGH. Residues Cys146, Cys149, Cys159, and Cys162 each coordinate Zn(2+). A 'KMSKS' region motif is present at residues 332-336; it reads KMSKS. Residue Lys335 coordinates ATP. The tRNA-binding domain occupies 573-675; that stretch reads DFAKVDMRIA…SGAQPGMQVK (103 aa).

This sequence belongs to the class-I aminoacyl-tRNA synthetase family. MetG type 1 subfamily. In terms of assembly, homodimer. It depends on Zn(2+) as a cofactor.

The protein localises to the cytoplasm. The enzyme catalyses tRNA(Met) + L-methionine + ATP = L-methionyl-tRNA(Met) + AMP + diphosphate. Is required not only for elongation of protein synthesis but also for the initiation of all mRNA translation through initiator tRNA(fMet) aminoacylation. The protein is Methionine--tRNA ligase of Yersinia pseudotuberculosis serotype O:3 (strain YPIII).